Here is a 217-residue protein sequence, read N- to C-terminus: Superoxide dismutase [Cu-Zn], chloroplastic (217 aa).

Residues 1 to 63 (MAAHSIFTTT…TTPKPLTVFA (63 aa)) constitute a chloroplast transit peptide. Residues H109, H111, and H126 each coordinate Cu cation. C120 and C209 are oxidised to a cystine. Zn(2+)-binding residues include H126, H134, H143, and D146. H183 is a binding site for Cu cation.

It belongs to the Cu-Zn superoxide dismutase family. In terms of assembly, homotetramer. Cu cation is required as a cofactor. It depends on Zn(2+) as a cofactor.

It is found in the plastid. It localises to the chloroplast. The enzyme catalyses 2 superoxide + 2 H(+) = H2O2 + O2. In terms of biological role, destroys radicals which are normally produced within the cells and which are toxic to biological systems. This chain is Superoxide dismutase [Cu-Zn], chloroplastic (SODCP.2), found in Solanum lycopersicum (Tomato).